The following is a 65-amino-acid chain: Toxin VmKTx1 (65 aa).

An N-terminal signal peptide occupies residues 1 to 21; it reads MKTSCLLTILLLSFLVAVAVA. Residues 22–28 constitute a propeptide that is removed on maturation; the sequence is EGERSAR. Disulfide bonds link Cys34–Cys54, Cys40–Cys59, Cys44–Cys61, and Cys49–Cys64. Cys64 bears the Cysteine amide mark.

The protein belongs to the short scorpion toxin superfamily. Potassium channel inhibitor family. Alpha-KTx 23 subfamily. In terms of tissue distribution, expressed by the venom gland.

It is found in the secreted. Its function is as follows. Voltage-gated potassium channel inhibitor. Selectively and reversibly binds (Kd=0.77 nM) and blocks hKv1.3/KCNA3 potassium channels of human T-lymphocytes. Also shows a very weak effect on hKv1.2/KCNA2 (Kd=7.1 uM). Also reduces the fraction of CD40L expressing T cells that are stimulated by alphaCD3/alphaCD28. The sequence is that of Toxin VmKTx1 from Vaejovis mexicanus smithi (Mexican scorpion).